Reading from the N-terminus, the 405-residue chain is MDGTTTTLPLAGIRVIDAATVIAAPFCATLLGEFGADVLKVEHPIGGDALRRFGTPTARGDTLTWLSESRNKRSVTLNLQHPEGARVFKELIAHSDVLCENFRPGTLEKWGLGWDVLSKINPRLIMLRVTGYGQTGPYRDRPGFARIAHAVGGIAYLAGMPKGTPVTPGSTTLADYMTGLYGCIGVLLALRHREQTGRGQYIDAALYESVFRCSDELVPAYGMYRKVRERHGSHYNEFACPHGHFQTKDGKWVAISCATDKLFARLANAMGRPELASSSVYGDQKVRLAHASDVNEIVRDWCSSLTRAEVLERCYATATPAAPLNDIADFFGDRHVHARRNLVAIDAEDLGETLIMPNVVPKLSETPGSIRSLGPKLGEHTEEVLKEILGMCDEQINDLRSKRVI.

The active-site Nucleophile is the aspartate 175.

This sequence belongs to the CoA-transferase III family. In terms of assembly, forms a large complex composed of six heterodimers (alpha, beta).

The enzyme catalyses succinyl-CoA + (S)-malate = (S)-malyl-CoA + succinate. The catalysed reaction is (3S)-citramalate + succinyl-CoA = (3S)-citramalyl-CoA + succinate. Functionally, involved in the 3-hydroxypropionate cycle used for autotrophic carbon dioxide fixation. Catalyzes the transfer of CoA moiety from succinyl-CoA to L-malate to yield L-malyl-CoA. This Chloroflexus aurantiacus (strain ATCC 29366 / DSM 635 / J-10-fl) protein is Succinyl-CoA--L-malate CoA-transferase beta subunit (smtB).